Reading from the N-terminus, the 82-residue chain is UPF0298 protein SMU_1670c (82 aa).

This sequence belongs to the UPF0298 family.

The protein resides in the cytoplasm. The polypeptide is UPF0298 protein SMU_1670c (Streptococcus mutans serotype c (strain ATCC 700610 / UA159)).